The sequence spans 710 residues: MSLSFRPLKYKRHTQTSTPHHPKQDIYFHEQPPGPPLGQTMSPPQWQVEESNPGFLPNNFSQLNLDPQQPEANGGQQRSKGPENNLYRKYEEKVRPCIDLIDSLRALGVEQDLALPAIAVIGDQSSGKSSVLEALSGVALPRGSGIITRCPLVLKLTKRECEWTGKITYRNITQQLQNPSEVEWEIRRAQNIIAGNGRGISHELINLEVTSPDVPDLTLIDLPGITRVAVENQPQDIGLQIKALIIQRQETINLVVVPCNVDIATKKYTEALSMAQEVDPDGDRTIGILTKPDLVDKGTEKGVLKVMQNLTYHLKKGYMIVKCRGQQDITNKLSLAEATRKETMFFETHPYFRVLLDEGKATMPLLAERLTTELIWHINKSLPLLENQIKEKHQRATEELQQYGDDIPSDEGDKMFFLIEKIKVFNEDIGKLIEGEEIVMETESRLCNKIREEFTSWILILTTNIEKVKSILNEEVSKYEKKYRGKELLGFVNYKTFETVVKHYLGQLIDPALKMLQKAMEIVWQTFKDTAKKHFAEFCNLHQTVQNKIEDIKTKQMAEAANLIQLQFKMEKLVFCQDQIYGVVLNKVREDIFNSMGKASETPQSKQPFLNDQSSISSIVEIGVHLNAYFMETSKRLANQIPFIIQYFMLQENGDKVQKAMMQLLQDTQHYSWLLQEQSDTATKRKFLKEKIFRLTQAQQALYEFPHFKG.

Residues 1 to 87 (MSLSFRPLKY…RSKGPENNLY (87 aa)) form a disordered region. 2 stretches are compositionally biased toward polar residues: residues 39-50 (QTMSPPQWQVEE) and 58-79 (NNFS…QQRS). The region spanning 112–383 (DLALPAIAVI…LIWHINKSLP (272 aa)) is the Dynamin-type G domain. Residues 122 to 129 (GDQSSGKS) form a G1 motif region. 122-129 (GDQSSGKS) lines the GTP pocket. The segment at 147 to 149 (ITR) is G2 motif. A G3 motif region spans residues 221–224 (DLPG). GTP contacts are provided by residues 221-225 (DLPGI) and 290-293 (TKPD). A G4 motif region spans residues 290–293 (TKPD). The tract at residues 322-325 (KCRG) is G5 motif. In terms of domain architecture, GED spans 619–710 (IVEIGVHLNA…ALYEFPHFKG (92 aa)).

It belongs to the TRAFAC class dynamin-like GTPase superfamily. Dynamin/Fzo/YdjA family.

The protein localises to the cytoplasm. It localises to the nucleus. Functionally, interferon-induced dynamin-like GTPase with antiviral activity against vesicular stomatitis virus (VSV). The sequence is that of Interferon-induced GTP-binding protein Mx2 (MX2) from Bubalus bubalis (Domestic water buffalo).